The following is a 429-amino-acid chain: CinA-like protein (429 aa).

It belongs to the CinA family.

The chain is CinA-like protein from Chlorobium limicola (strain DSM 245 / NBRC 103803 / 6330).